The following is a 375-amino-acid chain: Queuine tRNA-ribosyltransferase (375 aa).

Aspartate 89 functions as the Proton acceptor in the catalytic mechanism. Residues 89–93 (DSGGF), aspartate 143, glutamine 185, and glycine 212 contribute to the substrate site. Residues 243–249 (GVGKPED) are RNA binding. Catalysis depends on aspartate 262, which acts as the Nucleophile. The interval 267–271 (TRNAR) is RNA binding; important for wobble base 34 recognition. Zn(2+) is bound by residues cysteine 300, cysteine 302, cysteine 305, and histidine 331.

This sequence belongs to the queuine tRNA-ribosyltransferase family. Homodimer. Within each dimer, one monomer is responsible for RNA recognition and catalysis, while the other monomer binds to the replacement base PreQ1. It depends on Zn(2+) as a cofactor.

It carries out the reaction 7-aminomethyl-7-carbaguanine + guanosine(34) in tRNA = 7-aminomethyl-7-carbaguanosine(34) in tRNA + guanine. It participates in tRNA modification; tRNA-queuosine biosynthesis. Its function is as follows. Catalyzes the base-exchange of a guanine (G) residue with the queuine precursor 7-aminomethyl-7-deazaguanine (PreQ1) at position 34 (anticodon wobble position) in tRNAs with GU(N) anticodons (tRNA-Asp, -Asn, -His and -Tyr). Catalysis occurs through a double-displacement mechanism. The nucleophile active site attacks the C1' of nucleotide 34 to detach the guanine base from the RNA, forming a covalent enzyme-RNA intermediate. The proton acceptor active site deprotonates the incoming PreQ1, allowing a nucleophilic attack on the C1' of the ribose to form the product. After dissociation, two additional enzymatic reactions on the tRNA convert PreQ1 to queuine (Q), resulting in the hypermodified nucleoside queuosine (7-(((4,5-cis-dihydroxy-2-cyclopenten-1-yl)amino)methyl)-7-deazaguanosine). This Pseudoalteromonas translucida (strain TAC 125) protein is Queuine tRNA-ribosyltransferase.